Here is a 318-residue protein sequence, read N- to C-terminus: Pantothenate kinase (318 aa).

An ATP-binding site is contributed by 96–103 (GSVSVGKS).

The protein belongs to the prokaryotic pantothenate kinase family.

It is found in the cytoplasm. It catalyses the reaction (R)-pantothenate + ATP = (R)-4'-phosphopantothenate + ADP + H(+). It participates in cofactor biosynthesis; coenzyme A biosynthesis; CoA from (R)-pantothenate: step 1/5. The sequence is that of Pantothenate kinase from Bradyrhizobium sp. (strain ORS 278).